The sequence spans 345 residues: Phosphoribosylformylglycinamidine cyclo-ligase (345 aa).

This sequence belongs to the AIR synthase family.

Its subcellular location is the cytoplasm. The catalysed reaction is 2-formamido-N(1)-(5-O-phospho-beta-D-ribosyl)acetamidine + ATP = 5-amino-1-(5-phospho-beta-D-ribosyl)imidazole + ADP + phosphate + H(+). It participates in purine metabolism; IMP biosynthesis via de novo pathway; 5-amino-1-(5-phospho-D-ribosyl)imidazole from N(2)-formyl-N(1)-(5-phospho-D-ribosyl)glycinamide: step 2/2. This chain is Phosphoribosylformylglycinamidine cyclo-ligase, found in Shigella dysenteriae serotype 1 (strain Sd197).